The primary structure comprises 1703 residues: Homeobox protein prospero (1703 aa).

Disordered stretches follow at residues 23–292 (LKAN…SNGG), 322–357 (SVSTANSSSSNNNNSSTPAALATHSPTSNSPVSGAS), 437–521 (NSIA…QSQL), 608–692 (EPQT…ESVD), 732–751 (EDDDDDCVEQKTSGSGCLKK), 823–844 (QEDSESNELESPQIQQKRVEKN), 875–951 (SECQ…DSGA), 1040–1101 (FEQE…RMGG), 1197–1217 (SPRTKVADRPQNGPTPATQSA), 1245–1389 (PFCL…VSLP), and 1418–1469 (AGQA…PSML). Residues 36-53 (QQHQPQFQQQQQQQQQQQ) are compositionally biased toward low complexity. Residues 66-79 (SNGHTSPIPSQVNG) are compositionally biased toward polar residues. The span at 92 to 109 (TNTNTGSHSHSNSGNTNT) shows a compositional bias: low complexity. Residues 110–126 (DADKEQEREKAKEKANE) show a composition bias toward basic and acidic residues. The segment covering 127 to 136 (EESEDSDDDV) has biased composition (acidic residues). Composition is skewed to low complexity over residues 137–188 (VVVL…GGSS), 196–255 (SSRQ…ANSK), 274–292 (ASSNSNSNSSNNSSNSNGG), 327–337 (NSSSSNNNNSS), and 346–357 (SPTSNSPVSGAS). Residues 437–452 (NSIAPANSTPMSNGTN) show a composition bias toward polar residues. The segment covering 453-472 (ASISPGSAHSSSHSHQGVSP) has biased composition (low complexity). Phosphoserine is present on residues S479, S482, S485, and S497. Polar residues-rich tracts occupy residues 503–521 (SVSSLNGGASSGEQHQSQL) and 608–617 (EPQTAPQPQQ). Residues 618–642 (SPHGSSHSSRSGSGSGSHSSMASDG) show a composition bias toward low complexity. Basic and acidic residues-rich tracts occupy residues 643-658 (SLRRKSSDSLDSHGAQ) and 674-691 (SESRAPEEPQLPTKKESV). Phosphoserine is present on residues S651 and S654. Acidic residues predominate over residues 875-892 (SECQELDQDQDVEQEQEP). Positions 927–944 (PGSSSPSPSPLKPKTSLG) are enriched in low complexity. Basic and acidic residues predominate over residues 1040-1054 (FEQEQQEQQRRKEEQ). Residues 1055–1076 (QQQIQRQQQHLQQLQQQQMEQQ) are compositionally biased toward low complexity. The span at 1208 to 1217 (NGPTPATQSA) shows a compositional bias: polar residues. Positions 1252–1278 (QQQQQQTAQQQQSAQQQQQSSQQTQQQ) are enriched in low complexity. The short motif at 1291–1298 (PKKKRHKV) is the Nuclear localization signal element. Over residues 1328–1348 (PQQQQQQQQQQQQQQQQQQQQ) the composition is skewed to low complexity. The span at 1349-1367 (ASNGGNSNATPAQSPTRSS) shows a compositional bias: polar residues. The segment covering 1374-1384 (PQPPPPPPPMM) has biased composition (pro residues). Positions 1427–1437 (HQHHQQHHPHH) are enriched in basic residues. Positions 1438–1451 (QSMQLSSSPPGSLG) are enriched in low complexity. Residues 1545-1603 (SSTLTPMHLRKAKLMFFWVRYPSSAVLKMYFPDIKFNKNNTAQLVKWFSNFREFYYIQM) enclose the Prospero-type homeo domain. The homeo-Prospero stretch occupies residues 1545 to 1703 (SSTLTPMHLR…KSPNFLEQLE (159 aa)). In terms of domain architecture, Prospero spans 1604–1703 (EKYARQAVTE…KSPNFLEQLE (100 aa)).

The protein belongs to the Prospero homeodomain family.

It is found in the nucleus. Its subcellular location is the cytoplasm. The protein resides in the cell cortex. Functionally, homeodomain protein that controls neuronal identity. As a transcriptional factor, regulates the expression of ftz, eve and en in a subset of neuroblast progeny and modulates the transcriptional activity of other homeodomain proteins such as Dfd. Required for proper neuronal differentiation, axonal outgrowth and pathfinding of most or all neurons and their precursors in central and peripheral nervous systems. Regulates asymmetric stem cell self-renewal together with brat. The sequence is that of Homeobox protein prospero (pros) from Drosophila melanogaster (Fruit fly).